Consider the following 237-residue polypeptide: Ribose-5-phosphate isomerase A (237 aa).

Residues 28–31 (SGST), 83–86 (DGAD), and 97–100 (KGRG) contribute to the substrate site. Glu-106 serves as the catalytic Proton acceptor. Lys-124 serves as a coordination point for substrate.

Belongs to the ribose 5-phosphate isomerase family. Homodimer.

The catalysed reaction is aldehydo-D-ribose 5-phosphate = D-ribulose 5-phosphate. It functions in the pathway carbohydrate degradation; pentose phosphate pathway; D-ribose 5-phosphate from D-ribulose 5-phosphate (non-oxidative stage): step 1/1. In terms of biological role, catalyzes the reversible conversion of ribose-5-phosphate to ribulose 5-phosphate. The protein is Ribose-5-phosphate isomerase A of Thermomicrobium roseum (strain ATCC 27502 / DSM 5159 / P-2).